The following is a 464-amino-acid chain: ATP-dependent protease ATPase subunit HslU (464 aa).

Residues V18, 60-65 (GVGKTE), D277, E342, and R414 contribute to the ATP site.

It belongs to the ClpX chaperone family. HslU subfamily. A double ring-shaped homohexamer of HslV is capped on each side by a ring-shaped HslU homohexamer. The assembly of the HslU/HslV complex is dependent on binding of ATP.

It localises to the cytoplasm. Functionally, ATPase subunit of a proteasome-like degradation complex; this subunit has chaperone activity. The binding of ATP and its subsequent hydrolysis by HslU are essential for unfolding of protein substrates subsequently hydrolyzed by HslV. HslU recognizes the N-terminal part of its protein substrates and unfolds these before they are guided to HslV for hydrolysis. This chain is ATP-dependent protease ATPase subunit HslU, found in Lactobacillus leichmannii.